The sequence spans 84 residues: uncharacterized protein (84 aa).

The 2Fe-2S ferredoxin-type domain occupies 2 to 84; it reads ARVTLRITGT…RAKGDIEIEM (83 aa). Residues cysteine 37, cysteine 42, cysteine 45, and cysteine 74 each contribute to the [2Fe-2S] cluster site.

[2Fe-2S] cluster serves as cofactor.

This is an uncharacterized protein from Escherichia coli O6:H1 (strain CFT073 / ATCC 700928 / UPEC).